Consider the following 1571-residue polypeptide: Phospholipid-transporting ATPase DNF1 (1571 aa).

Residues 1-94 (MSGTFHGDGH…TPKLNNGSGT (94 aa)) form a disordered region. The Cytoplasmic segment spans residues 1–214 (MSGTFHGDGH…TFLPKNILFQ (214 aa)). Positions 29 to 40 (EDTHIAPTHFDD) are enriched in basic and acidic residues. Residues 42 to 56 (ATSNKYSRPQVSFND) are compositionally biased toward polar residues. Residue serine 53 is modified to Phosphoserine. Positions 66-76 (AEEFTFNDDTE) are enriched in acidic residues. Threonine 70 bears the Phosphothreonine mark. Polar residues predominate over residues 80–93 (HSFQPTPKLNNGSG). Residue serine 81 is modified to Phosphoserine. Threonine 85 bears the Phosphothreonine mark. Serine 92 carries the post-translational modification Phosphoserine. At threonine 94 the chain carries Phosphothreonine. Serine 104 is subject to Phosphoserine. Position 109 is a phosphothreonine (threonine 109). The helical transmembrane segment at 215-235 (FHNFANVYFLVLIILGAFQIF) threads the bilayer. Residues 234–241 (IFGVTNPG) are involved in phosphatidylcholine substrate selection. Topologically, residues 236 to 239 (GVTN) are extracellular. Residues 240–260 (PGLSAVPLVVIVIITAIKDAI) traverse the membrane as a helical segment. Residues 261–553 (EDSRRTVLDL…RISRELNFSV (293 aa)) are Cytoplasmic-facing. A phosphoserine mark is found at serine 351, serine 354, serine 358, and serine 365. Residue tyrosine 368 is modified to Phosphotyrosine. A helical transmembrane segment spans residues 554-574 (VINFVLLFILCFVSGIANGVY). Over 575 to 594 (YDKKGRSRFSYEFGTIAGSA) the chain is Extracellular. Residues 586 to 590 (EFGTI) are involved in phosphatidylcholine substrate selection. The chain crosses the membrane as a helical span at residues 595 to 615 (ATNGFVSFWVAVILYQSLVPI). The Cytoplasmic portion of the chain corresponds to 616-1188 (SLYISVEIIK…WSYKRLAEMI (573 aa)). Aspartate 667 acts as the 4-aspartylphosphate intermediate in catalysis. Residues aspartate 667, lysine 668, threonine 669, glutamate 801, phenylalanine 842, serine 844, lysine 847, and lysine 871 each coordinate ATP. Mg(2+) is bound at residue aspartate 667. Threonine 669 lines the Mg(2+) pocket. Lysine 895 is covalently cross-linked (Glycyl lysine isopeptide (Lys-Gly) (interchain with G-Cter in ubiquitin)). Arginine 909, threonine 910, threonine 989, glycine 990, aspartate 991, arginine 1104, and lysine 1110 together coordinate ATP. Mg(2+) is bound at residue aspartate 1130. 2 residues coordinate ATP: asparagine 1133 and aspartate 1134. A Mg(2+)-binding site is contributed by aspartate 1134. Residues 1189-1209 (PEFFYKNMIFALALFWYGIYN) traverse the membrane as a helical segment. Over 1210–1219 (DFDGSYLYEY) the chain is Extracellular. Residues 1220–1240 (TYMMFYNLAFTSLPVIFLGIL) traverse the membrane as a helical segment. Residues 1241 to 1270 (DQDVNDTISLVVPQLYRVGILRKEWNQRKF) lie on the Cytoplasmic side of the membrane. Residues 1271–1291 (LWYMLDGLYQSIICFFFPYLV) traverse the membrane as a helical segment. Over 1292–1307 (YHKNMIVTSNGLGLDH) the chain is Extracellular. A helical transmembrane segment spans residues 1308–1328 (RYFVGVYVTTIAVISCNTYVL). Residues 1329 to 1334 (LHQYRW) are Cytoplasmic-facing. Residues 1335–1355 (DWFSGLFIALSCLVVFAWTGI) traverse the membrane as a helical segment. The Extracellular portion of the chain corresponds to 1356–1375 (WSSAIASREFFKAAARIYGA). A helical transmembrane segment spans residues 1376 to 1396 (PSFWAVFFVAVLFCLLPRFTY). Residue arginine 1393 participates in a 1,2-diacyl-sn-glycero-3-phospho-L-serine binding. Over 1397-1571 (DSFQKFFYPT…ASLIGTQQNN (175 aa)) the chain is Cytoplasmic. Residue serine 1506 is modified to Phosphoserine. Threonine 1551 is subject to Phosphothreonine. A phosphoserine mark is found at serine 1552 and serine 1563.

Belongs to the cation transport ATPase (P-type) (TC 3.A.3) family. Type IV subfamily. Component of a flippase complex consisting of DNF1 and LEM3. Interacts with LEM3; the interaction is direct and required for their mutual export from the endoplasmic reticulum. The cofactor is Mg(2+). Phosphorylated by FPK1 and KIN82.

The protein resides in the cell membrane. Its subcellular location is the endosome membrane. It localises to the golgi apparatus. The protein localises to the trans-Golgi network membrane. It is found in the cell septum. The protein resides in the bud. The catalysed reaction is ATP + H2O + phospholipidSide 1 = ADP + phosphate + phospholipidSide 2.. It catalyses the reaction a 1,2-diacyl-sn-glycero-3-phosphoethanolamine(out) + ATP + H2O = a 1,2-diacyl-sn-glycero-3-phosphoethanolamine(in) + ADP + phosphate + H(+). It carries out the reaction a 1,2-diacyl-sn-glycero-3-phosphocholine(out) + ATP + H2O = a 1,2-diacyl-sn-glycero-3-phosphocholine(in) + ADP + phosphate + H(+). The enzyme catalyses a beta-D-glucosyl-(1&lt;-&gt;1')-N-acylsphing-4-enine(out) + ATP + H2O = a beta-D-glucosyl-(1&lt;-&gt;1')-N-acylsphing-4-enine(in) + ADP + phosphate + H(+). The catalysed reaction is a 1,2-diacyl-sn-glycero-3-phospho-L-serine(out) + ATP + H2O = a 1,2-diacyl-sn-glycero-3-phospho-L-serine(in) + ADP + phosphate + H(+). Its function is as follows. Catalytic component of a P4-ATPase flippase complex which catalyzes the hydrolysis of ATP coupled to the transport of glucosylceramide, phosphatidylcholine, phosphatidylethanolamine, and small amounts of phosphatidylserine from the lumenal to the cytosolic leaflet of the cell membrane and ensures the maintenance of asymmetric distribution of phospholipids. Does not appear to transport sphingomyelin, inositol phosphoceramide, or phosphatidic acid. Required for efficient endocytosis. The polypeptide is Phospholipid-transporting ATPase DNF1 (Saccharomyces cerevisiae (strain ATCC 204508 / S288c) (Baker's yeast)).